The sequence spans 120 residues: Large ribosomal subunit protein uL18 (120 aa).

The protein belongs to the universal ribosomal protein uL18 family. In terms of assembly, part of the 50S ribosomal subunit; part of the 5S rRNA/L5/L18/L25 subcomplex. Contacts the 5S and 23S rRNAs.

Functionally, this is one of the proteins that bind and probably mediate the attachment of the 5S RNA into the large ribosomal subunit, where it forms part of the central protuberance. The polypeptide is Large ribosomal subunit protein uL18 (Halalkalibacterium halodurans (strain ATCC BAA-125 / DSM 18197 / FERM 7344 / JCM 9153 / C-125) (Bacillus halodurans)).